Reading from the N-terminus, the 151-residue chain is CD-NTase-associated protein 19 (151 aa).

A run of 3 helical transmembrane segments spans residues 25–45 (TVFN…GVTL), 52–72 (VLFT…FWKL), and 127–147 (ISFV…FLMK).

It belongs to the Cap19 family.

The protein localises to the cell inner membrane. Its function is as follows. Membrane protein component of a CBASS (cyclic oligonucleotide-based antiphage signaling system) which provides immunity against bacteriophage. The CD-NTase protein synthesizes cyclic nucleotides in response to infection; these serve as specific second messenger signals. The signals activate a diverse range of effectors, leading to bacterial cell death and thus abortive phage infection. A type III CBASS system. Expression of this CBASS system (Cap17-CapW-CdnC-Cap7-Cap6-Cap18-Cap19) in a susceptible E.coli (strain JP313) confers resistance to bacteriophage lambda cI-. In Escherichia coli, this protein is CD-NTase-associated protein 19.